A 66-amino-acid polypeptide reads, in one-letter code: Large ribosomal subunit protein bL35 (66 aa).

Belongs to the bacterial ribosomal protein bL35 family.

The polypeptide is Large ribosomal subunit protein bL35 (Ruegeria sp. (strain TM1040) (Silicibacter sp.)).